The primary structure comprises 395 residues: GPI-anchor transamidase (395 aa).

Residues 1 to 27 (MVGTWFLCRGFTTLAGLLLLPFGSLAA) form the signal peptide. The Lumenal segment spans residues 28 to 368 (SQIEDQAEQF…PKLKDWHPPG (341 aa)). Positions 79, 82, 118, and 120 each coordinate Ca(2+). The active-site Proton donor is the histidine 164. Residue cysteine 206 is the Nucleophile; acyl-thioester intermediate of the active site. Cysteine 206, serine 232, and serine 234 together coordinate a protein. The segment at 231-236 (DSLSHQ) is autoinhibitory loop. An intrachain disulfide couples cysteine 275 to cysteine 280. The helical transmembrane segment at 369–385 (GFILGLWALIIMVFFKT) threads the bilayer. Residues 386–395 (YGIKHMKFIF) are Cytoplasmic-facing.

It belongs to the peptidase C13 family. Heteropentamer. Part of the GPI-anchor transamidase complex, consisting of PIGK, PIGT, PIGS, PIGU and GAA1. Interacts with GPAA1. Interacts with PIGT; this interaction, via a disulfide link, stabilizes the expression of GAA1 and PIGK and links them to PIGS. In terms of processing, the disulfide bond between PIGK/GPI8 and PIGT is important for normal enzyme activity.

It is found in the endoplasmic reticulum membrane. The protein operates within glycolipid biosynthesis; glycosylphosphatidylinositol-anchor biosynthesis. Its activity is regulated as follows. In the absence of proproteins substrates, exists in an inactive state with a disrupted catalytic site by an autoinhibitory loop. The binding of proprotein substrates, particularly the CSP region, to GPI-T triggers concerted conformational changes that alleviate the inhibition by the autoinhibitory loop. Meanwhile, proprotein residues near the omega- site induce the formation of a catalytic cleft for catalysis, following which the products are released and GPI-T reverts to the inactive state. Functionally, catalytic subunit of the glycosylphosphatidylinositol-anchor (GPI-anchor) transamidase (GPI-T) complex that catalyzes the formation of the linkage between a proprotein and a GPI-anchor and participates in GPI anchored protein biosynthesis. Recognizes diverse proproteins at a C-terminal signal peptide (CSP) region that lacks consensus sequence and replaces it with a GPI-anchor via a transamidation reaction. Transamidation catalysis reaction follows a two-phase mechanism. In the acyl-enzyme phase, the carbonyl group of the proproteins's omega-site undergoes a nucleophilic attack forming an enzyme-substrate thioester bond. Followed by a general acid catalysis that allows CSP releasing, regenerating the carbonyl, and forming the acyl-enzyme intermediate. In the GPI-anchor attachment phase, the amino group of the GPI-anchor's ethanolamine phosphate, the one on third mannose (EtNP3), mediates a nucleophilic attack on the carbonyl of the acyl-enzyme intermediate, replacing the CSP, allowing GPI-anchor attachment to the omega-residue, therefore forming the product and freeing the enzyme. The sequence is that of GPI-anchor transamidase from Sus scrofa (Pig).